A 438-amino-acid chain; its full sequence is Malic acid transport protein (438 aa).

10 helical membrane-spanning segments follow: residues 37 to 57 (SWFA…SFPF), 65 to 85 (IGKI…SCML), 106 to 126 (LFIA…AIYA), 140 to 160 (ILYY…FFTI), 172 to 192 (SPAW…AGAV), 205 to 225 (VIFG…LFAV), 242 to 262 (PGMF…INIA), 288 to 308 (FMAI…MVSF), 321 to 341 (ACGW…TIEI), and 353 to 373 (FGHI…YLMV). Residues 390-438 (AHPPPKPNTGVLNPTFPPEKAPASLEKVDTHVTSTGGESDPPSSEHESV) form a disordered region. 6 positions are modified to phosphoserine: S413, S423, S428, S432, S433, and S437.

The protein belongs to the tellurite-resistance/dicarboxylate transporter (TDT) family.

The protein resides in the membrane. In terms of biological role, permease for malate and other C4 dicarboxylic acids. This Schizosaccharomyces pombe (strain 972 / ATCC 24843) (Fission yeast) protein is Malic acid transport protein (mae1).